The chain runs to 727 residues: C-terminal-binding protein 1 (727 aa).

A THAP-type zinc finger spans residues 5–60 (CGFPNCKFRSRYRGLEDNRHFYRIPKRPLILRQRWLTAIGRTEETVVSQLRICSAH). Residues 64-158 (GEKKEGDIPV…HPPVLPDPQQ (95 aa)) form a disordered region. Residues 77-94 (TVDKQIKIELPPKESKNS) are compositionally biased toward basic and acidic residues. Residues tyrosine 251, 331-336 (LGCGRV), aspartate 355, 388-394 (CNLGDET), 415-417 (TSH), aspartate 441, and 467-470 (HSAW) contribute to the NAD(+) site. Over residues 587–613 (ANAQRGSPANRSSRSSPSPHTNKSSVS) the composition is skewed to low complexity. Disordered stretches follow at residues 587-629 (ANAQ…SPAA) and 652-681 (APNG…GDEN).

It belongs to the D-isomer specific 2-hydroxyacid dehydrogenase family. In terms of assembly, homodimer.

Functionally, binds DNA and represses gene expression. Plays a role in regulation of life span, possibly by regulating transcription of genes important for lipid metabolism. This chain is C-terminal-binding protein 1, found in Caenorhabditis elegans.